The primary structure comprises 255 residues: Coniferyl-alcohol dehydrogenase (255 aa).

Residues 12–17 (GVSSGI), D36, 51–52 (DL), and G77 contribute to the NAD(+) site. S117 is a binding site for substrate. NAD(+)-binding residues include Y157 and K161. The active-site Proton acceptor is the Y157.

This sequence belongs to the short-chain dehydrogenases/reductases (SDR) family.

It carries out the reaction (E)-coniferol + NADP(+) = (E)-coniferaldehyde + NADPH + H(+). Catalyzes the conversion of coniferyl alcohol into coniferyl aldehyde in the eugenol degradation pathway. Specific for coniferyl alcohol; does not act on cinnamyl alcohol, 4-coumaryl alcohol or sinapyl alcohol. The polypeptide is Coniferyl-alcohol dehydrogenase (calA) (Pseudomonas sp. (strain HR199 / DSM 7063)).